Consider the following 704-residue polypeptide: Pentatricopeptide repeat-containing protein At4g28010 (704 aa).

17 PPR repeats span residues 71–105 (LAFA…DTFI), 106–140 (NFVS…GFAF), 141–175 (NVYN…SLMP), 176–210 (DVFS…GCSW), 211–245 (SLVT…GLEA), 246–280 (DLVV…GDSP), 281–315 (CAIT…GVRP), 316–350 (NVYT…DEEP), 351–385 (NAVT…RTRP), 386–416 (DNIT…MLKD), 423–453 (DVIS…LVEK), 458–492 (DRVT…KIVR), 493–527 (NSDT…ELQP), 528–562 (SVFD…NNFP), 563–597 (DVVS…GLSP), 598–632 (DLFT…GFEP), and 633–667 (DAHI…DIVL).

It belongs to the PPR family. P subfamily.

The polypeptide is Pentatricopeptide repeat-containing protein At4g28010 (Arabidopsis thaliana (Mouse-ear cress)).